The primary structure comprises 449 residues: MHPSSRANGPAPHKPYNPFYLQLYFWVIIAIILGALLGHCYPAVGQQLKPLGDAFIKLVKMIISPVIFLTIVTGIASVAHVGTVARVFGKAMVYFLFFSTLALLLGLVVAHVVHPGAGMNINPVDLHQGEIANYVEKSHDLTLVGFLMDIIPKTLLSPFVGDNILQVLFVAVLFGIALALAGERGKPVLNLLDALTVPVFKLVQMLMKMAPIGAFGAIAFTIGKYGVDSLVNLGGLVGSFYLTSLLFVLVILGAVSWLCGFSILKLIRYLKAELLLVLGTSSSESALPSLMEKMVQAGCGKSVVGLVVPTGYSFNLDGTNIYMTLAALFIAQATNTELTPAHQLALFLVAMLSSKGAAGVSGAGFITLAATLAVVPEVPIAGMALILGVDRFMSECRSLTNFIGNAVATLVVSRWENALNYEQLKIALDGSEAAYQSLHANDAEPSVSR.

8 consecutive transmembrane segments (helical) span residues 18-38, 61-81, 93-113, 159-179, 202-222, 244-264, 346-366, and 369-389; these read PFYL…ALLG, MIIS…VAHV, VYFL…AHVV, FVGD…IALA, LVQM…AFTI, SLLF…FSIL, LFLV…AGFI, and AATL…ILGV.

Belongs to the dicarboxylate/amino acid:cation symporter (DAACS) (TC 2.A.23) family.

It localises to the cell inner membrane. Its function is as follows. Responsible for the transport of dicarboxylates such as succinate, fumarate, and malate from the periplasm across the membrane. The protein is C4-dicarboxylate transport protein of Xylella fastidiosa (strain M23).